Here is a 71-residue protein sequence, read N- to C-terminus: Hainantoxin-X-2 (71 aa).

An N-terminal signal peptide occupies residues 1-26 (MKTAIFTVVLALAVFAVLCLVVSTHA). A propeptide spanning residues 27–43 (ERHSKTDMEDSPMIQER) is cleaved from the precursor. Intrachain disulfides connect Cys-52/Cys-65 and Cys-61/Cys-70.

Belongs to the neurotoxin 36 family. 02 subfamily. As to expression, expressed by the venom gland.

The protein resides in the secreted. In terms of biological role, reversibly blocks N-type calcium channels (Cav2.2/CACNA1B) in rat dorsal root ganglion cells. Elicits no toxic symptoms in either vertebrates or invertebrates during a period of 48 hours post-injection, when it was assayed in vivo by direct injection into mice and cockroaches. In Cyriopagopus hainanus (Chinese bird spider), this protein is Hainantoxin-X-2.